The following is a 68-amino-acid chain: Lantibiotic mersacidin (68 aa).

Positions 1–28 (MSQEAIIRSWKDPFSRENSTQNPAGNPF) are disordered. Residues 1-48 (MSQEAIIRSWKDPFSRENSTQNPAGNPFSELKEAQMDKLVGAGDMEAA) constitute a propeptide that is removed on maturation. The beta-methyllanthionine (Cys-Thr) cross-link spans 49-50 (CT). 2 consecutive cross-links (beta-methyllanthionine (Thr-Cys)) follow at residues 52-60 (TLPGGGGVC) and 61-66 (TLTSEC). The segment at residues 63-68 (TSECIC) is a cross-link (S-(2-aminovinyl)-3-methyl-D-cysteine (Thr-Cys)). Ser-64 bears the 2,3-didehydroalanine (Ser) mark.

It belongs to the type B lantibiotic family. Maturation of lantibiotics involves the enzymatic conversion of Thr, and Ser into dehydrated AA and the formation of thioether bonds with cysteine. The carboxy-terminal beta-methyllanthionine undergoes decarboxylation. This is followed by membrane translocation and cleavage of the modified precursor.

Its function is as follows. Kills a number of Gram-positive bacteria. Acts at the level of cell wall biosynthesis by interfering with bacterial peptidoglycan biosynthesis. Specifically inhibits the conversion of the lipid II intermediate into polymeric nascent glycan strands by transglycosylation. May interact with the peptidoglycan precursor rather than with the enzyme. The chain is Lantibiotic mersacidin (mrsA) from Bacillus sp. (strain HIL-Y85/54728).